A 380-amino-acid polypeptide reads, in one-letter code: Probable dual-specificity RNA methyltransferase RlmN (380 aa).

Residue Glu-112 is the Proton acceptor of the active site. Residues 118–358 (YPDRVTACLS…TTVRDTRGRE (241 aa)) form the Radical SAM core domain. An intrachain disulfide couples Cys-125 to Cys-363. [4Fe-4S] cluster contacts are provided by Cys-132, Cys-136, and Cys-139. Residues 187–188 (GE), Ser-221, 244–246 (SLH), and Asn-320 contribute to the S-adenosyl-L-methionine site. Cys-363 serves as the catalytic S-methylcysteine intermediate.

The protein belongs to the radical SAM superfamily. RlmN family. The cofactor is [4Fe-4S] cluster.

It is found in the cytoplasm. The catalysed reaction is adenosine(2503) in 23S rRNA + 2 reduced [2Fe-2S]-[ferredoxin] + 2 S-adenosyl-L-methionine = 2-methyladenosine(2503) in 23S rRNA + 5'-deoxyadenosine + L-methionine + 2 oxidized [2Fe-2S]-[ferredoxin] + S-adenosyl-L-homocysteine. It catalyses the reaction adenosine(37) in tRNA + 2 reduced [2Fe-2S]-[ferredoxin] + 2 S-adenosyl-L-methionine = 2-methyladenosine(37) in tRNA + 5'-deoxyadenosine + L-methionine + 2 oxidized [2Fe-2S]-[ferredoxin] + S-adenosyl-L-homocysteine. Its function is as follows. Specifically methylates position 2 of adenine 2503 in 23S rRNA and position 2 of adenine 37 in tRNAs. The polypeptide is Probable dual-specificity RNA methyltransferase RlmN (Salinispora arenicola (strain CNS-205)).